Consider the following 407-residue polypeptide: MKRAFIMVLDSFGIGATEDADRFGDVGSDTLGHIAEACANGEADNGRKGPLNLPNLTRLGLVKAHEGSTGKIAAGMDGNADVIGAYAWAHELSSGKDTPSGHWEIAGVPVLFDWGYFSDHENSFPQELLDKLVKRANLPGYLGNCHSSGTVILDQLGEEHMKTGKPIFYTSADSVFQIACHEETFGLDKLYELCEIAREELTEGGYNIGRVIARPFIGDKAGNFQRTGNRHDLAVEPPAPTVLQKLVDEKQGHVVSVGKIADIYANCGITKKVKATGLDALFDATLKEMKEAGDKTIVFTNFVDFDSSWGHRRDIAGYAAGLELFDRRLPELMELVGEDDILILTADHGCDPSWTGTDHTREHIPVLIYGPKVKPGSLGHRETFADIGQTLATYFGTSPMDYGKNML.

D10, D306, H311, D347, H348, and H359 together coordinate Mn(2+).

The protein belongs to the phosphopentomutase family. The cofactor is Mn(2+).

The protein localises to the cytoplasm. The catalysed reaction is 2-deoxy-alpha-D-ribose 1-phosphate = 2-deoxy-D-ribose 5-phosphate. It catalyses the reaction alpha-D-ribose 1-phosphate = D-ribose 5-phosphate. The protein operates within carbohydrate degradation; 2-deoxy-D-ribose 1-phosphate degradation; D-glyceraldehyde 3-phosphate and acetaldehyde from 2-deoxy-alpha-D-ribose 1-phosphate: step 1/2. Functionally, isomerase that catalyzes the conversion of deoxy-ribose 1-phosphate (dRib-1-P) and ribose 1-phosphate (Rib-1-P) to deoxy-ribose 5-phosphate (dRib-5-P) and ribose 5-phosphate (Rib-5-P), respectively. In Salmonella paratyphi C (strain RKS4594), this protein is Phosphopentomutase.